Reading from the N-terminus, the 383-residue chain is Probable endoplasmic reticulum-Golgi intermediate compartment protein 3 (383 aa).

Over 1–26 (MLISQLKKFDAYPKTVDDFRVKTYTG) the chain is Cytoplasmic. A helical transmembrane segment spans residues 27–47 (AIVSIIGGVFILWLFFSQVTL). Residues 48–347 (YFSTDIHHEL…GKSFASFLTN (300 aa)) lie on the Lumenal side of the membrane. The chain crosses the membrane as a helical span at residues 348–368 (VCAIIGGVFTVFGIFDSFIYY). At 369-383 (STKNLQKKIDLGKTF) the chain is on the cytoplasmic side.

It belongs to the ERGIC family.

Its subcellular location is the endoplasmic reticulum-Golgi intermediate compartment membrane. It is found in the golgi apparatus. The protein localises to the cis-Golgi network membrane. The protein resides in the endoplasmic reticulum membrane. Possible role in transport between endoplasmic reticulum and Golgi. The chain is Probable endoplasmic reticulum-Golgi intermediate compartment protein 3 (ergic3) from Dictyostelium discoideum (Social amoeba).